Reading from the N-terminus, the 215-residue chain is N-(5'-phosphoribosyl)anthranilate isomerase (215 aa).

Belongs to the TrpF family.

It catalyses the reaction N-(5-phospho-beta-D-ribosyl)anthranilate = 1-(2-carboxyphenylamino)-1-deoxy-D-ribulose 5-phosphate. It participates in amino-acid biosynthesis; L-tryptophan biosynthesis; L-tryptophan from chorismate: step 3/5. The sequence is that of N-(5'-phosphoribosyl)anthranilate isomerase from Parvibaculum lavamentivorans (strain DS-1 / DSM 13023 / NCIMB 13966).